Reading from the N-terminus, the 585-residue chain is MSALSTKLEPTNSYSESLPPQRRSPLEAEGRYRWNRGNYSITRRRIDIWGFVLTLLYQFWLNGKKWSYAGGYTEEKLQQRRRRQAKWIRENLLSLGPTFIKVGQLFSTRSDLFPAEYVEELSKLQDEVPAFSYEQAAGIIEEELGKPIAKLYRSFDPVPLAAASLGQVHKAQLHTGEDVVVKVQRPGLKKLFTIDLAILKKIAQYFQNHPKWGRGRDWNGIYEECCKILWQETDYLREGRSADTFRRNFRGEDWVKVPRVYWRYTSTQILTLEYLPGIKISHYDALEAAGLERKELAQLGARAYLFQLLNHGFFHADPHPGNLAVSPEAGELIFYDFGMMGEITPDTKNKLMDTLFGVAEKNAERIVNSLVALGALKETEDMGPIRRSVQFLLDNFMDKPFEEQSITKISDDLYEIAYDQPFRFPATFTFVMRAFSTLEGVGKGLDPDFNFMAVAQPFALQIMNNSNGFNPAGNIMDELGRQAVQVGNSALGLPRRIEDSLDRLDRGDIRVRVRSTETDRLLRRMGTMQMGTNYVLFTCALVLSATLLFVNNYFMAAAVVLLMSLVPAFALWRLLKRLERQDRMF.

The segment covering 1 to 18 (MSALSTKLEPTNSYSESL) has biased composition (polar residues). The tract at residues 1–23 (MSALSTKLEPTNSYSESLPPQRR) is disordered.

The protein belongs to the protein kinase superfamily. ADCK protein kinase family.

This is an uncharacterized protein from Synechocystis sp. (strain ATCC 27184 / PCC 6803 / Kazusa).